Here is a 634-residue protein sequence, read N- to C-terminus: Ras and EF-hand domain-containing protein homolog (634 aa).

EF-hand domains follow at residues 5–33 (DVEN…CPQL) and 33–68 (LDDN…TVQH). Ca(2+)-binding residues include Asp46, Asp48, Ser50, Lys52, and Glu57. The stretch at 169–310 (LSEKKHENER…RADFDQKQDE (142 aa)) forms a coiled coil. Disordered stretches follow at residues 216–237 (ERER…EMSE) and 308–328 (QDEL…SESV). GTP-binding positions include 449 to 454 (AVGKSS), 552 to 555 (NKVD), and 585 to 586 (AL). Residues 632 to 634 (RGS) constitute a propeptide, removed in mature form.

The protein belongs to the small GTPase superfamily. Rab family. As to quaternary structure, homodimer.

The protein resides in the cytoplasm. It is found in the perinuclear region. Binds GTP and GDP. Plays a role in uterine seam cell development. In Caenorhabditis briggsae, this protein is Ras and EF-hand domain-containing protein homolog.